The following is a 163-amino-acid chain: Nucleotide-binding protein ESA_02876 (163 aa).

Belongs to the YajQ family.

Its function is as follows. Nucleotide-binding protein. The protein is Nucleotide-binding protein ESA_02876 of Cronobacter sakazakii (strain ATCC BAA-894) (Enterobacter sakazakii).